Reading from the N-terminus, the 146-residue chain is Anti-sigma F factor (146 aa).

It belongs to the anti-sigma-factor family.

The catalysed reaction is L-seryl-[protein] + ATP = O-phospho-L-seryl-[protein] + ADP + H(+). It carries out the reaction L-threonyl-[protein] + ATP = O-phospho-L-threonyl-[protein] + ADP + H(+). Functionally, binds to sigma F and blocks its ability to form an RNA polymerase holoenzyme (E-sigma F). Phosphorylates SpoIIAA on a serine residue. This phosphorylation may enable SpoIIAA to act as an anti-anti-sigma factor that counteracts SpoIIAB and thus releases sigma F from inhibition. The protein is Anti-sigma F factor of Halalkalibacterium halodurans (strain ATCC BAA-125 / DSM 18197 / FERM 7344 / JCM 9153 / C-125) (Bacillus halodurans).